Consider the following 302-residue polypeptide: MMTFATQLNAAILRTGSVTCVGLDPRLEQLPKPLRDSVSEKRKDSVAAAYTQFCCEIIDAVAGLVPCVKPQAAFFEQLGPAGMVSLGEVISHANQAGLIVITDGKRNDIGSTATAYADAYLGSAEPDRSPWGSDALTVSPYLGRDSLEPFVEVCDRRAAGIFVLVKTSNPGGGYLQDLSVDGKTIYQSVAELVTELNKSRLDADGYGPVGAVVGATYPEQLVELRKAMPHSILLVPGFGAQGGSADDVRAAMDANGAGAVVNSSRHIVFAHKREEFSVAADESNWQDAVRAATIQMNEQLKG.

Lys105 (proton donor) is an active-site residue.

The protein belongs to the OMP decarboxylase family. Type 2 subfamily.

The enzyme catalyses orotidine 5'-phosphate + H(+) = UMP + CO2. The protein operates within pyrimidine metabolism; UMP biosynthesis via de novo pathway; UMP from orotate: step 2/2. The polypeptide is Orotidine 5'-phosphate decarboxylase (Rhodopirellula baltica (strain DSM 10527 / NCIMB 13988 / SH1)).